A 3590-amino-acid chain; its full sequence is Filamentous hemagglutinin (3590 aa).

Disordered stretches follow at residues 3256–3309 and 3417–3498; these read GGGS…VEVS and APPP…GRHV. Over residues 3289-3299 the composition is skewed to pro residues; the sequence is PSRPTTPPASP. Over residues 3300 to 3309 the composition is skewed to low complexity; that stretch reads QPIRATVEVS. A compositionally biased stretch (pro residues) spans 3417 to 3432; the sequence is APPPVVETAQPLPPVK.

The protein resides in the cell surface. Functionally, evidence for a role in host-cell binding and infection. The polypeptide is Filamentous hemagglutinin (fhaB) (Bordetella pertussis (strain Tohama I / ATCC BAA-589 / NCTC 13251)).